The sequence spans 261 residues: Carbonic anhydrase 1 (261 aa).

At A2 the chain carries N-acetylalanine. The region spanning A4–F261 is the Alpha-carbonic anhydrase domain. The active-site Proton donor/acceptor is the H65. Residues H95, H97, and H120 each coordinate Zn(2+). Substrate contacts are provided by residues T200 and T200–H201. A disordered region spans residues A239 to F261.

It belongs to the alpha-carbonic anhydrase family. Requires Zn(2+) as cofactor.

Its subcellular location is the cytoplasm. It catalyses the reaction hydrogencarbonate + H(+) = CO2 + H2O. The catalysed reaction is urea = cyanamide + H2O. Inhibited by acetazolamide. In terms of biological role, catalyzes the reversible hydration of carbon dioxide. Can hydrate cyanamide to urea. The polypeptide is Carbonic anhydrase 1 (Ca1) (Mus musculus (Mouse)).